We begin with the raw amino-acid sequence, 228 residues long: MDEKKQQNITIKGTKDGLTLHLDDCCSFTELLQELDEKLSTHYYDGDGRSLIEVHVKVGNRYLTEVQQEEIRTLIRNKKNLVVDSIESDVITKAEAIAWKEETEIVPISKIVRSGQVLHVKGNLLLIGDVNPGGMVIAGGNIFVVGSLRGIAHAGYYGDKDAVIAASVMNPMQLRISDVTTRAPEEKEDGAETAECAYINEDNHIVVDRLQLLTHLRPNLTKLERGIV.

Belongs to the MinC family. Interacts with MinD and FtsZ.

Cell division inhibitor that blocks the formation of polar Z ring septums. Rapidly oscillates between the poles of the cell to destabilize FtsZ filaments that have formed before they mature into polar Z rings. Prevents FtsZ polymerization. The protein is Probable septum site-determining protein MinC of Bacillus cytotoxicus (strain DSM 22905 / CIP 110041 / 391-98 / NVH 391-98).